The sequence spans 651 residues: ATP synthase F(1) complex catalytic subunit beta, mitochondrial (651 aa).

A mitochondrion-targeting transit peptide spans 1 to 30; it reads MFVARRLSKNITQISKTAVKTSVRAVPVRG. ADP-binding residues include Gly259, Val260, Gly261, Lys262, Thr263, and Val264. Gly259 contributes to the ATP binding site. The phosphate site is built by Gly259, Val260, Gly261, Lys262, and Thr263. 4 residues coordinate ATP: Gly261, Lys262, Thr263, and Val264. A Mg(2+)-binding site is contributed by Thr263. Glu288 contacts Mg(2+). Residue Arg289 coordinates ATP.

This sequence belongs to the ATPase alpha/beta chains family. Homotrimer. Component of the ATP synthase complex composed at least of ATP5F1A/subunit alpha, ATP5F1B/subunit beta, ATP5MC1/subunit c (homooctomer), MT-ATP6/subunit a, MT-ATP8/subunit 8, ATP5ME/subunit e, ATP5MF/subunit f, ATP5MG/subunit g, ATP5MK/subunit k, ATP5MJ/subunit j, ATP5F1C/subunit gamma, ATP5F1D/subunit delta, ATP5F1E/subunit epsilon, ATP5PF/subunit F6, ATP5PB/subunit b, ATP5PD/subunit d, ATP5PO/subunit OSCP. ATP synthase complex consists of a soluble F(1) head domain (subunits alpha(3) and beta(3)) - the catalytic core - and a membrane F(0) domain - the membrane proton channel (subunits c, a, 8, e, f, g, k and j). These two domains are linked by a central stalk (subunits gamma, delta, and epsilon) rotating inside the F1 region and a stationary peripheral stalk (subunits F6, b, d, and OSCP).

It localises to the mitochondrion inner membrane. The catalysed reaction is ATP + H2O + 4 H(+)(in) = ADP + phosphate + 5 H(+)(out). Catalytic subunit beta, of the mitochondrial membrane ATP synthase complex (F(1)F(0) ATP synthase or Complex V) that produces ATP from ADP in the presence of a proton gradient across the membrane which is generated by electron transport complexes of the respiratory chain. ATP synthase complex consist of a soluble F(1) head domain - the catalytic core - and a membrane F(1) domain - the membrane proton channel. These two domains are linked by a central stalk rotating inside the F(1) region and a stationary peripheral stalk. During catalysis, ATP synthesis in the catalytic domain of F(1) is coupled via a rotary mechanism of the central stalk subunits to proton translocation. In vivo, can only synthesize ATP although its ATP hydrolase activity can be activated artificially in vitro. With the subunit alpha (ATP5F1A), forms the catalytic core in the F(1) domain. In Dictyostelium discoideum (Social amoeba), this protein is ATP synthase F(1) complex catalytic subunit beta, mitochondrial.